We begin with the raw amino-acid sequence, 103 residues long: Small ribosomal subunit protein uS10 (103 aa).

It belongs to the universal ribosomal protein uS10 family. As to quaternary structure, part of the 30S ribosomal subunit.

In terms of biological role, involved in the binding of tRNA to the ribosomes. The sequence is that of Small ribosomal subunit protein uS10 from Borrelia duttonii (strain Ly).